The following is a 297-amino-acid chain: Small ribosomal subunit biogenesis GTPase RsgA (297 aa).

The CP-type G domain maps to 65–223 (RNELVRPPVA…VADTPGFSAI (159 aa)). Residues 114–117 (TKVD) and 166–174 (GQSGAGKST) each bind GTP. Zn(2+) contacts are provided by C247, C252, H254, and C260.

The protein belongs to the TRAFAC class YlqF/YawG GTPase family. RsgA subfamily. In terms of assembly, monomer. Associates with 30S ribosomal subunit, binds 16S rRNA. The cofactor is Zn(2+).

The protein localises to the cytoplasm. Its function is as follows. One of several proteins that assist in the late maturation steps of the functional core of the 30S ribosomal subunit. Helps release RbfA from mature subunits. May play a role in the assembly of ribosomal proteins into the subunit. Circularly permuted GTPase that catalyzes slow GTP hydrolysis, GTPase activity is stimulated by the 30S ribosomal subunit. This Enterococcus faecalis (strain ATCC 700802 / V583) protein is Small ribosomal subunit biogenesis GTPase RsgA.